We begin with the raw amino-acid sequence, 523 residues long: UDP-glucuronosyltransferase 3A1 (523 aa).

The N-terminal stretch at 1 to 23 (MAVGRKSLILSLLIQHFVLLHGA) is a signal peptide. The Extracellular portion of the chain corresponds to 24–483 (KILTVCFLGG…YSYQQPLYQQ (460 aa)). The N-linked (GlcNAc...) asparagine glycan is linked to Asn125. The helical transmembrane segment at 484–504 (YLLDVFLFVCVCVIGACYLTV) threads the bilayer. Over 505 to 523 (KLLKMFIQKLCSFRKLKQN) the chain is Cytoplasmic.

This sequence belongs to the UDP-glycosyltransferase family.

It localises to the membrane. It catalyses the reaction glucuronate acceptor + UDP-alpha-D-glucuronate = acceptor beta-D-glucuronoside + UDP + H(+). UDP-glucuronosyltransferases catalyze phase II biotransformation reactions in which lipophilic substrates are conjugated with glucuronic acid to increase water solubility and enhance excretion. They are of major importance in the conjugation and subsequent elimination of potentially toxic xenobiotics and endogenous compounds. This Xenopus laevis (African clawed frog) protein is UDP-glucuronosyltransferase 3A1 (ugt3a1).